The chain runs to 402 residues: S-adenosylmethionine synthase (402 aa).

Histidine 16 lines the ATP pocket. Aspartate 18 is a binding site for Mg(2+). Glutamate 44 is a K(+) binding site. L-methionine is bound by residues glutamate 57 and glutamine 103. Residues 103–113 (QSPDIAQGVDT) are flexible loop. ATP contacts are provided by residues 178–180 (DGK), 249–250 (KF), aspartate 258, 264–265 (RK), alanine 281, and lysine 285. An L-methionine-binding site is contributed by aspartate 258. Lysine 289 is a binding site for L-methionine.

This sequence belongs to the AdoMet synthase family. Homotetramer; dimer of dimers. Mg(2+) is required as a cofactor. Requires K(+) as cofactor.

The protein localises to the cytoplasm. The catalysed reaction is L-methionine + ATP + H2O = S-adenosyl-L-methionine + phosphate + diphosphate. It functions in the pathway amino-acid biosynthesis; S-adenosyl-L-methionine biosynthesis; S-adenosyl-L-methionine from L-methionine: step 1/1. Catalyzes the formation of S-adenosylmethionine (AdoMet) from methionine and ATP. The overall synthetic reaction is composed of two sequential steps, AdoMet formation and the subsequent tripolyphosphate hydrolysis which occurs prior to release of AdoMet from the enzyme. This chain is S-adenosylmethionine synthase, found in Mycolicibacterium vanbaalenii (strain DSM 7251 / JCM 13017 / BCRC 16820 / KCTC 9966 / NRRL B-24157 / PYR-1) (Mycobacterium vanbaalenii).